We begin with the raw amino-acid sequence, 290 residues long: HTH-type transcriptional activator RhaR (290 aa).

The 99-residue stretch at 179 to 277 folds into the HTH araC/xylS-type domain; sequence DLIMSALQQS…GMTPRDYRQR (99 aa). 2 DNA-binding regions (H-T-H motif) span residues 196–217 and 244–267; these read ADFCHKNQLVERSLKQLFRQQT and ISDIAARCGFEDSNYFSAVFTREA.

In terms of assembly, binds DNA as a dimer.

Its subcellular location is the cytoplasm. In terms of biological role, activates expression of the rhaSR operon in response to L-rhamnose. The chain is HTH-type transcriptional activator RhaR from Yersinia pestis bv. Antiqua (strain Antiqua).